We begin with the raw amino-acid sequence, 146 residues long: Hemoglobin subunit beta-2 (146 aa).

The region spanning 2–146 (EWTNFERATI…VVSSLGKQYH (145 aa)) is the Globin domain. 2 residues coordinate heme b: histidine 63 and histidine 92.

The protein belongs to the globin family. In terms of assembly, hb2 is a heterotetramer of two alpha chains and two beta-2 chains. As to expression, red blood cells.

In terms of biological role, involved in oxygen transport from gills to the various peripheral tissues. The sequence is that of Hemoglobin subunit beta-2 (hbb2) from Cygnodraco mawsoni (Antarctic dragonfish).